A 119-amino-acid chain; its full sequence is Anamorsin homolog (119 aa).

Residues 33–119 form a disordered region; that stretch reads LKQATKGEDC…KVKLNLTDDI (87 aa). 4 residues coordinate [2Fe-2S] cluster: cysteine 42, cysteine 49, cysteine 52, and cysteine 54. Positions 42–54 are fe-S binding site A; sequence CTTRRRACKNCVC. Positions 81, 84, 92, and 95 each coordinate [4Fe-4S] cluster. Short sequence motifs (cx2C motif) lie at residues 81 to 84 and 92 to 95; these read CGNC and CANC. Positions 81 to 95 are fe-S binding site B; that stretch reads CGNCAKGDAFRCANC.

This sequence belongs to the anamorsin family. Monomer. [2Fe-2S] cluster serves as cofactor. Requires [4Fe-4S] cluster as cofactor.

Its subcellular location is the cytoplasm. It localises to the mitochondrion intermembrane space. Its function is as follows. Component of the cytosolic iron-sulfur (Fe-S) protein assembly (CIA) machinery. Required for the maturation of extramitochondrial Fe-S proteins. Part of an electron transfer chain functioning in an early step of cytosolic Fe-S biogenesis, facilitating the de novo assembly of a [4Fe-4S] cluster on the cytosolic Fe-S scaffold complex. Electrons are transferred from NADPH via a FAD- and FMN-containing diflavin oxidoreductase. Together with the diflavin oxidoreductase, also required for the assembly of the diferric tyrosyl radical cofactor of ribonucleotide reductase (RNR), probably by providing electrons for reduction during radical cofactor maturation in the catalytic small subunit. The sequence is that of Anamorsin homolog from Leishmania braziliensis.